A 766-amino-acid polypeptide reads, in one-letter code: Hypoxia-inducible factor 1-alpha (766 aa).

Residues 1–26 (MDTGVVPEKKSRVSSDRRKEKSRDAA) form a disordered region. Positions 7 to 26 (PEKKSRVSSDRRKEKSRDAA) are enriched in basic and acidic residues. Residues 17–70 (RRKEKSRDAARCRRGKESEVFYELAQELPLPHSVTSNLDKASIMRLAISYLHMR) form the bHLH domain. 2 consecutive PAS domains span residues 82-159 (EERE…TSKK) and 230-300 (PHPS…FAKG). The 44-residue stretch at 304-347 (TGQYRMLAKRGGFVWVETQATVIYNNKNSQPQCVVCVNYVLSGI) folds into the PAC domain. Residues 361 to 383 (DMRPVKKELEEEESSEPEVSPVL) are disordered. A 4-hydroxyproline modification is found at P426. Positions 475–509 (DQHLVPNTSVDTTEVSTGPDSSSTPGSHSFTEPDS) are disordered. A compositionally biased stretch (polar residues) spans 479-489 (VPNTSVDTTEV). The span at 490–503 (STGPDSSSTPGSHS) shows a compositional bias: low complexity. A 4-hydroxyproline modification is found at P559. The short motif at 718–721 (LLGI) is the Nuclear localization signal element. N743 carries the post-translational modification (3S)-3-hydroxyasparagine.

As to quaternary structure, efficient DNA binding requires heterodimerization of an alpha and a beta/ARNT subunit. In normoxia, is hydroxylated on Pro-426 and Pro-559. The hydroxylated prolines promote interaction with VHL, initiating rapid ubiquitination and subsequent proteasomal degradation. Under hypoxia, proline hydroxylation is impaired and ubiquitination is attenuated, resulting in stabilization. In terms of processing, in normoxia, is hydroxylated on Asn-743, thus abrogating interaction with CREBBP and EP300 and preventing transcriptional activation. Post-translationally, the iron and 2-oxoglutarate dependent 3-hydroxylation of asparagine is (S) stereospecific within HIF CTAD domains.

It localises to the cytoplasm. Its subcellular location is the nucleus. It is found in the nucleus speckle. With respect to regulation, induced by reactive oxygen species (ROS). In terms of biological role, functions as a master transcriptional regulator of the adaptive response to hypoxia. Under hypoxic conditions, activates the transcription of over 40 genes, including erythropoietin, glucose transporters, glycolytic enzymes, vascular endothelial growth factor, HILPDA, and other genes whose protein products increase oxygen delivery or facilitate metabolic adaptation to hypoxia. Plays an essential role in embryonic vascularization, tumor angiogenesis and pathophysiology of ischemic disease. The protein is Hypoxia-inducible factor 1-alpha (hif1a) of Oncorhynchus mykiss (Rainbow trout).